We begin with the raw amino-acid sequence, 38 residues long: Natriuretic peptide DNP (38 aa).

Cys7 and Cys23 are disulfide-bonded. The disordered stretch occupies residues 19 to 38 (SNLGCPSLRDPRPNAPSTSA).

The protein belongs to the natriuretic peptide family. In terms of tissue distribution, expressed by the venom gland.

The protein resides in the secreted. Exhibits vasodilator, natriuretic and diuretic properties in animal models and human tissues. Acts by stimulating cGMP via the natriuretic peptide receptor 1 (NPR1). Is a poor agonist of the atrial natriuretic peptide receptor 2 (NPR2). Is not degraded by neutral endopeptidase (NEP/MME). Binds to atrial natriuretic peptide clearance receptor (NPR-C/NPR3), which may be responsible of the removal of DNP from the circulation. Increases calcium uptake and induces histamine release from rat peritoneal mast cells. Increases calcium-activated potassium (KCa) current in gastric antral circular smooth muscle cells by increasing cGMP production and activating inositol trisphosphate receptors (IP3Rs). In vivo, reduces both systolic and diastolic blood pressure with no effect on heart rate, when intravenously injected in conscious rabbits. This chain is Natriuretic peptide DNP, found in Dendroaspis angusticeps (Eastern green mamba).